Reading from the N-terminus, the 325-residue chain is GTP 3',8-cyclase (325 aa).

Residues 10–229 (GYGRRINYLR…PSLEKIKSED (220 aa)) enclose the Radical SAM core domain. Residue Arg19 coordinates GTP. Residues Cys26 and Cys30 each contribute to the [4Fe-4S] cluster site. Tyr32 provides a ligand contact to S-adenosyl-L-methionine. Cys33 contacts [4Fe-4S] cluster. Residue Arg69 coordinates GTP. Position 73 (Gly73) interacts with S-adenosyl-L-methionine. Thr100 lines the GTP pocket. An S-adenosyl-L-methionine-binding site is contributed by Ser124. Position 161 (Lys161) interacts with GTP. Met195 contributes to the S-adenosyl-L-methionine binding site. [4Fe-4S] cluster-binding residues include Cys257 and Cys260. 262 to 264 (RLR) serves as a coordination point for GTP. Cys274 serves as a coordination point for [4Fe-4S] cluster.

This sequence belongs to the radical SAM superfamily. MoaA family. As to quaternary structure, monomer and homodimer. It depends on [4Fe-4S] cluster as a cofactor.

It carries out the reaction GTP + AH2 + S-adenosyl-L-methionine = (8S)-3',8-cyclo-7,8-dihydroguanosine 5'-triphosphate + 5'-deoxyadenosine + L-methionine + A + H(+). The protein operates within cofactor biosynthesis; molybdopterin biosynthesis. Functionally, catalyzes the cyclization of GTP to (8S)-3',8-cyclo-7,8-dihydroguanosine 5'-triphosphate. The polypeptide is GTP 3',8-cyclase (Peptoclostridium acidaminophilum (Eubacterium acidaminophilum)).